The primary structure comprises 298 residues: MLYDQIATNKRRTGYVMFGFGVLTLAIGAALGYLFWNSWVSGTVIAAVVAVVYMLIMISQSTNVVMSMNHAREIKDVSQAPQLWHLIEDMALVAQVPMPRVFIIDDPSPNAFATGNDPKHAAVAVTTGIMERLNREELEGVIGHEMSHVRNYDIRLQTIALALSAAIGLLVNFASNWFWWGGATRRRDDRDDSAGNIIGLVISIFLIILAPLAASIAQMALSRNREYLADASSVELTRNPQGLINALRKIDDSQPMKAADPNSAALYISDPFKHKQKFADLFATHPPIADRIARLEKM.

The next 2 helical transmembrane spans lie at 16-36 (VMFGFGVLTLAIGAALGYLFW) and 38-58 (SWVSGTVIAAVVAVVYMLIMI). Position 144 (H144) interacts with Zn(2+). E145 is an active-site residue. Residue H148 coordinates Zn(2+). A run of 2 helical transmembrane segments spans residues 159–179 (IALALSAAIGLLVNFASNWFW) and 197–217 (IIGLVISIFLIILAPLAASIA). E226 lines the Zn(2+) pocket.

This sequence belongs to the peptidase M48B family. The cofactor is Zn(2+).

The protein localises to the cell membrane. This chain is Protease HtpX homolog, found in Levilactobacillus brevis (strain ATCC 367 / BCRC 12310 / CIP 105137 / JCM 1170 / LMG 11437 / NCIMB 947 / NCTC 947) (Lactobacillus brevis).